Here is a 592-residue protein sequence, read N- to C-terminus: A-type ATP synthase subunit A (592 aa).

234-241 provides a ligand contact to ATP; it reads GGFGTGKT.

Belongs to the ATPase alpha/beta chains family. In terms of assembly, has multiple subunits with at least A(3), B(3), C, D, E, F, H, I and proteolipid K(x).

Its subcellular location is the cell membrane. The enzyme catalyses ATP + H2O + 4 H(+)(in) = ADP + phosphate + 5 H(+)(out). In terms of biological role, component of the A-type ATP synthase that produces ATP from ADP in the presence of a proton gradient across the membrane. The A chain is the catalytic subunit. The sequence is that of A-type ATP synthase subunit A from Cenarchaeum symbiosum (strain A).